The following is a 431-amino-acid chain: Beta-lactamase hydrolase-like protein (431 aa).

Zn(2+) is bound by residues His-212, His-214, and His-286. Residue Asp-309 participates in substrate binding.

The protein belongs to the metallo-beta-lactamase superfamily. Requires Zn(2+) as cofactor.

Could play a role in cell adherence or biofilm development. The sequence is that of Beta-lactamase hydrolase-like protein from Agrobacterium fabrum (strain C58 / ATCC 33970) (Agrobacterium tumefaciens (strain C58)).